The chain runs to 649 residues: Lipoteichoic acid synthase 2 (649 aa).

Topologically, residues 1 to 9 (MKTFIKERG) are cytoplasmic. Residues 10–30 (LAFFLIAVVLLWIKTYVGYVL) form a helical membrane-spanning segment. The Extracellular portion of the chain corresponds to 31–42 (NFNLGIDNTIQK). Residues 43–63 (ILLFVNPLSSSLFFLGFGLLF) traverse the membrane as a helical segment. The Cytoplasmic portion of the chain corresponds to 64 to 69 (KKKLQQ). The chain crosses the membrane as a helical span at residues 70 to 90 (TAIIVIHFLMSFLLYANIVYY). Over 91–118 (RFFNDFITIPVIMQAKTNGGQLGDSAFS) the chain is Extracellular. Residues 119-139 (LMRPTDAFYFIDTIILIILAI) form a helical membrane-spanning segment. Residues 140 to 151 (KVNKPAETSSKK) lie on the Cytoplasmic side of the membrane. A helical membrane pass occupies residues 152-172 (SFRIIFASSILVFLINLAVAE). Residues 173–649 (SDRPELLTRS…SETSKDNEDK (477 aa)) are Extracellular-facing. Positions 253 and 297 each coordinate Mn(2+). Threonine 297 is an active-site residue. Histidine 412 is a binding site for substrate. Residues aspartate 471 and histidine 472 each contribute to the Mn(2+) site. The segment at 622-649 (FKKVNPSDYDYTKHDEDSSETSKDNEDK) is disordered. A compositionally biased stretch (basic and acidic residues) spans 631–649 (DYTKHDEDSSETSKDNEDK).

It belongs to the LTA synthase family. Proteolytically cleaved.

Its subcellular location is the cell membrane. It localises to the secreted. It functions in the pathway cell wall biogenesis; lipoteichoic acid biosynthesis. In terms of biological role, catalyzes the polymerization of lipoteichoic acid (LTA) polyglycerol phosphate, a reaction that presumably uses phosphatidylglycerol (PG) as substrate. The chain is Lipoteichoic acid synthase 2 (ltaS2) from Bacillus subtilis (strain 168).